Here is a 353-residue protein sequence, read N- to C-terminus: Chorismate synthase (353 aa).

Arg48 lines the NADP(+) pocket. Residues 125-127, 238-239, Gly278, 293-297, and Arg319 each bind FMN; these read RSS, NA, and KPTSS.

Belongs to the chorismate synthase family. As to quaternary structure, homotetramer. Requires FMNH2 as cofactor.

It catalyses the reaction 5-O-(1-carboxyvinyl)-3-phosphoshikimate = chorismate + phosphate. The protein operates within metabolic intermediate biosynthesis; chorismate biosynthesis; chorismate from D-erythrose 4-phosphate and phosphoenolpyruvate: step 7/7. Catalyzes the anti-1,4-elimination of the C-3 phosphate and the C-6 proR hydrogen from 5-enolpyruvylshikimate-3-phosphate (EPSP) to yield chorismate, which is the branch point compound that serves as the starting substrate for the three terminal pathways of aromatic amino acid biosynthesis. This reaction introduces a second double bond into the aromatic ring system. This is Chorismate synthase from Buchnera aphidicola subsp. Cinara cedri (strain Cc).